Consider the following 149-residue polypeptide: Pleckstrin homology domain-containing family J member 1 (149 aa).

Positions 15–108 (PAEMAAELGM…WMEALRRASY (94 aa)) constitute a PH domain.

Expressed in testis and liver.

In Homo sapiens (Human), this protein is Pleckstrin homology domain-containing family J member 1 (PLEKHJ1).